A 305-amino-acid chain; its full sequence is Translation initiation factor eIF2B subunit alpha (305 aa).

Lys-35 is subject to N6-acetyllysine.

It belongs to the eIF-2B alpha/beta/delta subunits family. In terms of assembly, component of the translation initiation factor 2B (eIF2B) complex which is a heterodecamer of two sets of five different subunits: alpha, beta, gamma, delta and epsilon. Subunits alpha, beta and delta comprise a regulatory subcomplex and subunits epsilon and gamma comprise a catalytic subcomplex. Within the complex, the hexameric regulatory complex resides at the center, with the two heterodimeric catalytic subcomplexes bound on opposite sides.

It is found in the cytoplasm. It localises to the cytosol. Activated by the chemical integrated stress response (ISR) inhibitor ISRIB which stimulates guanine nucleotide exchange factor activity for both phosphorylated and unphosphorylated eIF2. In terms of biological role, acts as a component of the translation initiation factor 2B (eIF2B) complex, which catalyzes the exchange of GDP for GTP on eukaryotic initiation factor 2 (eIF2) gamma subunit. Its guanine nucleotide exchange factor activity is repressed when bound to eIF2 complex phosphorylated on the alpha subunit, thereby limiting the amount of methionyl-initiator methionine tRNA available to the ribosome and consequently global translation is repressed. This Rattus norvegicus (Rat) protein is Translation initiation factor eIF2B subunit alpha (Eif2b1).